The primary structure comprises 597 residues: Inactive metallocarboxypeptidase ECM14 (597 aa).

Positions 1–21 (MRLFTHGQVLALLAFVNTISA) are cleaved as a signal peptide. Positions 22–174 (TPSFSTNSYP…QTIYESYPSP (153 aa)) are excised as a propeptide. Over residues 170-179 (SYPSPSQSPS) the composition is skewed to low complexity. Residues 170–189 (SYPSPSQSPSGRERGFLPSG) are disordered. The Peptidase M14 domain occupies 202 to 522 (NYQPLSVIVP…NAVMMLGRFL (321 aa)). Positions 264 and 267 each coordinate Zn(2+). Substrate is bound by residues 264 to 267 (HARE), Arg-322, and 339 to 340 (DR). The cysteines at positions 333 and 356 are disulfide-linked. Asn-349 carries N-linked (GlcNAc...) asparagine glycosylation. His-396 contributes to the Zn(2+) binding site. 397–398 (SY) serves as a coordination point for substrate. The segment at 543–597 (KDDKPILNDDDDDDADTNDDGIGRKDDSWIPDEYKGDNDRDESDGGWAFRRLRKR) is disordered. Positions 550-561 (NDDDDDDADTND) are enriched in acidic residues. The span at 563 to 580 (GIGRKDDSWIPDEYKGDN) shows a compositional bias: basic and acidic residues.

This sequence belongs to the peptidase M14 family. Zn(2+) is required as a cofactor.

Its subcellular location is the vacuole. The protein resides in the secreted. Its function is as follows. Inactive carboxypeptidase that may play a role in cell wall organization and biogenesis. The protein is Inactive metallocarboxypeptidase ECM14 (ECM14) of Ajellomyces capsulatus (strain G186AR / H82 / ATCC MYA-2454 / RMSCC 2432) (Darling's disease fungus).